A 194-amino-acid polypeptide reads, in one-letter code: Large ribosomal subunit protein bL25B (194 aa).

This sequence belongs to the bacterial ribosomal protein bL25 family. CTC subfamily. Part of the 50S ribosomal subunit; part of the 5S rRNA/L5/L18/L25 subcomplex. Contacts the 5S rRNA. Binds to the 5S rRNA independently of L5 and L18.

Functionally, this is one of the proteins that binds to the 5S RNA in the ribosome where it forms part of the central protuberance. In Symbiobacterium thermophilum (strain DSM 24528 / JCM 14929 / IAM 14863 / T), this protein is Large ribosomal subunit protein bL25B.